Consider the following 451-residue polypeptide: Kynureninase (451 aa).

Residues Leu-131, Ser-132, 159 to 162 (FPSD), Ser-215, Asp-244, His-247, and Tyr-269 contribute to the pyridoxal 5'-phosphate site. The residue at position 270 (Lys-270) is an N6-(pyridoxal phosphate)lysine. Positions 303 and 331 each coordinate pyridoxal 5'-phosphate.

Belongs to the kynureninase family. In terms of assembly, homodimer. It depends on pyridoxal 5'-phosphate as a cofactor.

It is found in the cytoplasm. It catalyses the reaction L-kynurenine + H2O = anthranilate + L-alanine + H(+). It carries out the reaction 3-hydroxy-L-kynurenine + H2O = 3-hydroxyanthranilate + L-alanine + H(+). Its pathway is amino-acid degradation; L-kynurenine degradation; L-alanine and anthranilate from L-kynurenine: step 1/1. It participates in cofactor biosynthesis; NAD(+) biosynthesis; quinolinate from L-kynurenine: step 2/3. In terms of biological role, catalyzes the cleavage of L-kynurenine (L-Kyn) and L-3-hydroxykynurenine (L-3OHKyn) into anthranilic acid (AA) and 3-hydroxyanthranilic acid (3-OHAA), respectively. The protein is Kynureninase of Dictyostelium discoideum (Social amoeba).